Here is a 1408-residue protein sequence, read N- to C-terminus: DNA-directed RNA polymerase subunit beta' (1408 aa).

Cys70, Cys72, Cys85, and Cys88 together coordinate Zn(2+). Residues Asp460, Asp462, and Asp464 each coordinate Mg(2+). Cys822, Cys896, Cys903, and Cys906 together coordinate Zn(2+). The interval 1386 to 1408 (DTGEAPPLSEEETGEIRNSGYAV) is disordered.

This sequence belongs to the RNA polymerase beta' chain family. The RNAP catalytic core consists of 2 alpha, 1 beta, 1 beta' and 1 omega subunit. When a sigma factor is associated with the core the holoenzyme is formed, which can initiate transcription. Requires Mg(2+) as cofactor. The cofactor is Zn(2+).

The enzyme catalyses RNA(n) + a ribonucleoside 5'-triphosphate = RNA(n+1) + diphosphate. Functionally, DNA-dependent RNA polymerase catalyzes the transcription of DNA into RNA using the four ribonucleoside triphosphates as substrates. In Nitrosospira multiformis (strain ATCC 25196 / NCIMB 11849 / C 71), this protein is DNA-directed RNA polymerase subunit beta'.